The primary structure comprises 166 residues: Interferon gamma (166 aa).

The first 23 residues, 1 to 23 (MNYTSYILAFQLCVILGSSGCYC), serve as a signal peptide directing secretion. Glutamine 24 carries the post-translational modification Pyrrolidone carboxylic acid. Residues asparagine 39 and asparagine 106 are each glycosylated (N-linked (GlcNAc...) asparagine).

This sequence belongs to the type II (or gamma) interferon family. Homodimer. Interacts with IFNGR1 (via extracellular domain); this interaction promotes IFNGR1 dimerization. As to expression, released primarily from activated T lymphocytes.

The protein resides in the secreted. Functionally, type II interferon produced by immune cells such as T-cells and NK cells that plays crucial roles in antimicrobial, antiviral, and antitumor responses by activating effector immune cells and enhancing antigen presentation. Primarily signals through the JAK-STAT pathway after interaction with its receptor IFNGR1 to affect gene regulation. Upon IFNG binding, IFNGR1 intracellular domain opens out to allow association of downstream signaling components JAK2, JAK1 and STAT1, leading to STAT1 activation, nuclear translocation and transcription of IFNG-regulated genes. Many of the induced genes are transcription factors such as IRF1 that are able to further drive regulation of a next wave of transcription. Plays a role in class I antigen presentation pathway by inducing a replacement of catalytic proteasome subunits with immunoproteasome subunits. In turn, increases the quantity, quality, and repertoire of peptides for class I MHC loading. Increases the efficiency of peptide generation also by inducing the expression of activator PA28 that associates with the proteasome and alters its proteolytic cleavage preference. Up-regulates as well MHC II complexes on the cell surface by promoting expression of several key molecules such as cathepsins B/CTSB, H/CTSH, and L/CTSL. Participates in the regulation of hematopoietic stem cells during development and under homeostatic conditions by affecting their development, quiescence, and differentiation. The chain is Interferon gamma (IFNG) from Camelus bactrianus (Bactrian camel).